Consider the following 359-residue polypeptide: Peptide chain release factor 1 (359 aa).

Glutamine 232 is subject to N5-methylglutamine.

It belongs to the prokaryotic/mitochondrial release factor family. Post-translationally, methylated by PrmC. Methylation increases the termination efficiency of RF1.

The protein localises to the cytoplasm. Its function is as follows. Peptide chain release factor 1 directs the termination of translation in response to the peptide chain termination codons UAG and UAA. The protein is Peptide chain release factor 1 of Lawsonia intracellularis (strain PHE/MN1-00).